Here is a 152-residue protein sequence, read N- to C-terminus: Deoxyuridine 5'-triphosphate nucleotidohydrolase (152 aa).

Substrate contacts are provided by residues 72-74 (RSG), Asn85, and 89-91 (TID).

It belongs to the dUTPase family. Mg(2+) is required as a cofactor.

It carries out the reaction dUTP + H2O = dUMP + diphosphate + H(+). It participates in pyrimidine metabolism; dUMP biosynthesis; dUMP from dCTP (dUTP route): step 2/2. Its function is as follows. This enzyme is involved in nucleotide metabolism: it produces dUMP, the immediate precursor of thymidine nucleotides and it decreases the intracellular concentration of dUTP so that uracil cannot be incorporated into DNA. This chain is Deoxyuridine 5'-triphosphate nucleotidohydrolase, found in Rhodopseudomonas palustris (strain ATCC BAA-98 / CGA009).